The primary structure comprises 160 residues: Transcriptional repressor NrdR (160 aa).

Residues 3–34 fold into a zinc finger; sequence CPFCGHADTQVVDSRVSEEGDTIRRRRRCLSC. An ATP-cone domain is found at 49–139; sequence PTVVKRDGSR…VYKSFEDIGE (91 aa).

The protein belongs to the NrdR family. The cofactor is Zn(2+).

Its function is as follows. Negatively regulates transcription of bacterial ribonucleotide reductase nrd genes and operons by binding to NrdR-boxes. The chain is Transcriptional repressor NrdR from Bordetella avium (strain 197N).